Consider the following 252-residue polypeptide: Imidazole glycerol phosphate synthase subunit HisF (252 aa).

Active-site residues include aspartate 11 and aspartate 130.

It belongs to the HisA/HisF family. As to quaternary structure, heterodimer of HisH and HisF.

It localises to the cytoplasm. It catalyses the reaction 5-[(5-phospho-1-deoxy-D-ribulos-1-ylimino)methylamino]-1-(5-phospho-beta-D-ribosyl)imidazole-4-carboxamide + L-glutamine = D-erythro-1-(imidazol-4-yl)glycerol 3-phosphate + 5-amino-1-(5-phospho-beta-D-ribosyl)imidazole-4-carboxamide + L-glutamate + H(+). Its pathway is amino-acid biosynthesis; L-histidine biosynthesis; L-histidine from 5-phospho-alpha-D-ribose 1-diphosphate: step 5/9. IGPS catalyzes the conversion of PRFAR and glutamine to IGP, AICAR and glutamate. The HisF subunit catalyzes the cyclization activity that produces IGP and AICAR from PRFAR using the ammonia provided by the HisH subunit. The sequence is that of Imidazole glycerol phosphate synthase subunit HisF from Bacillus cereus (strain G9842).